The sequence spans 511 residues: Coatomer subunit delta (511 aa).

The segment covering 168–177 (QARRDAERQG) has biased composition (basic and acidic residues). The segment at 168–188 (QARRDAERQGKKAPGFGGFGS) is disordered. Ser223 carries the phosphoserine modification. 2 positions are modified to N6-acetyllysine: Lys233 and Lys241. Position 244 is a phosphoserine (Ser244). An MHD domain is found at 271-511 (MESVHMKIEE…TFLVDKYEIL (241 aa)). N6-acetyllysine is present on residues Lys309 and Lys351. Ser493 carries the post-translational modification Phosphoserine.

The protein belongs to the adaptor complexes medium subunit family. Delta-COP subfamily. As to quaternary structure, oligomeric complex that consists of at least the alpha, beta, beta', gamma, delta, epsilon and zeta subunits.

It localises to the cytoplasm. Its subcellular location is the golgi apparatus membrane. The protein resides in the cytoplasmic vesicle. It is found in the COPI-coated vesicle membrane. In terms of biological role, the coatomer is a cytosolic protein complex that binds to dilysine motifs and reversibly associates with Golgi non-clathrin-coated vesicles, which further mediate biosynthetic protein transport from the ER, via the Golgi up to the trans Golgi network. Coatomer complex is required for budding from Golgi membranes, and is essential for the retrograde Golgi-to-ER transport of dilysine-tagged proteins. In mammals, the coatomer can only be recruited by membranes associated to ADP-ribosylation factors (ARFs), which are small GTP-binding proteins; the complex also influences the Golgi structural integrity, as well as the processing, activity, and endocytic recycling of LDL receptors. In Rattus norvegicus (Rat), this protein is Coatomer subunit delta (Arcn1).